Reading from the N-terminus, the 466-residue chain is MADGKIVQCIGAVVDVEFPRNAMPKIYDALKMAGSELTLEVQQQLGDGIVRTIALGTSDGLRRGMIIQNTGNPITVPVGKATLGRIMDVLGNPIDECGPVSHERTASIHRKAPAYDELSPSQDLLETGIKVIDLVCPFAKGGKVGLFGGAGVGKTVNMMELINNIAKAHSGLSVFAGVGERTREGNDFYHEMADAKVVDLENPENSKVAMVYGQMNEPPGNRLRVALTGLTMAEAFRDEGKDVLFFVDNIYRFTLAGTEVSALLGRMPSAVGYQPTLAEEMGRLQERITSTKTGSITSIQAVYVPADDLTDPSPATTFAHLDSTVVLSRDIASLGIYPAVDPLDSTSRQLDPLVVGQDHYDTARAVQGTLQRYKELRDIIAILGMDELAPEDKLLVARARKMQRFLSQPFHVAEVFTGAPGKYVSLKDTINGFKMIASGELDHLPEQAFYMVGTIEEAIEKAKKLN.

148-155 (GGAGVGKT) is an ATP binding site.

This sequence belongs to the ATPase alpha/beta chains family. In terms of assembly, F-type ATPases have 2 components, CF(1) - the catalytic core - and CF(0) - the membrane proton channel. CF(1) has five subunits: alpha(3), beta(3), gamma(1), delta(1), epsilon(1). CF(0) has three main subunits: a(1), b(2) and c(9-12). The alpha and beta chains form an alternating ring which encloses part of the gamma chain. CF(1) is attached to CF(0) by a central stalk formed by the gamma and epsilon chains, while a peripheral stalk is formed by the delta and b chains.

The protein resides in the cell inner membrane. The catalysed reaction is ATP + H2O + 4 H(+)(in) = ADP + phosphate + 5 H(+)(out). Its function is as follows. Produces ATP from ADP in the presence of a proton gradient across the membrane. The catalytic sites are hosted primarily by the beta subunits. This Herminiimonas arsenicoxydans protein is ATP synthase subunit beta.